The primary structure comprises 154 residues: Prefoldin subunit 5 (154 aa).

A2 carries the N-acetylalanine modification. K42 is modified (N6-acetyllysine). The residue at position 56 (S56) is a Phosphoserine.

Belongs to the prefoldin subunit alpha family. In terms of assembly, heterohexamer of two PFD-alpha type and four PFD-beta type subunits. Binds to MYC; interacts with its N-terminal domain. Highly expressed in pancreas and skeletal muscle and moderately in other tissues.

Its subcellular location is the nucleus. It localises to the cytoplasm. Its function is as follows. Binds specifically to cytosolic chaperonin (c-CPN) and transfers target proteins to it. Binds to nascent polypeptide chain and promotes folding in an environment in which there are many competing pathways for nonnative proteins. Represses the transcriptional activity of MYC. The chain is Prefoldin subunit 5 (PFDN5) from Homo sapiens (Human).